A 44-amino-acid chain; its full sequence is Cytochrome b559 subunit beta (44 aa).

The chain crosses the membrane as a helical span at residues 19 to 35 (WLSVHALGVPSVFFLGA). Residue histidine 23 coordinates heme.

Belongs to the PsbE/PsbF family. In terms of assembly, heterodimer of an alpha subunit and a beta subunit. PSII is composed of 1 copy each of membrane proteins PsbA, PsbB, PsbC, PsbD, PsbE, PsbF, PsbH, PsbI, PsbJ, PsbK, PsbL, PsbM, PsbT, PsbX, PsbY, PsbZ, Psb30/Ycf12, peripheral proteins PsbO, CyanoQ (PsbQ), PsbU, PsbV and a large number of cofactors. It forms dimeric complexes. Requires heme b as cofactor.

The protein resides in the cellular thylakoid membrane. Functionally, this b-type cytochrome is tightly associated with the reaction center of photosystem II (PSII). PSII is a light-driven water:plastoquinone oxidoreductase that uses light energy to abstract electrons from H(2)O, generating O(2) and a proton gradient subsequently used for ATP formation. It consists of a core antenna complex that captures photons, and an electron transfer chain that converts photonic excitation into a charge separation. The sequence is that of Cytochrome b559 subunit beta from Synechococcus elongatus (strain ATCC 33912 / PCC 7942 / FACHB-805) (Anacystis nidulans R2).